Reading from the N-terminus, the 468-residue chain is Protein CA_C1420 (468 aa).

The unknown stretch occupies residues 1–289 (MSLNGFYLLP…LKELERIRKD (289 aa)). The 173-residue stretch at 296 to 468 (QEKDPYVKLA…KFMVTRHKES (173 aa)) folds into the AMMECR1 domain.

The chain is Protein CA_C1420 from Clostridium acetobutylicum (strain ATCC 824 / DSM 792 / JCM 1419 / IAM 19013 / LMG 5710 / NBRC 13948 / NRRL B-527 / VKM B-1787 / 2291 / W).